Here is a 158-residue protein sequence, read N- to C-terminus: C-type lectin BiL (158 aa).

Residues 1-23 (MGRFIFVSFGLLVVFLSLSGAKG) form the signal peptide. Cystine bridges form between C26/C37, C54/C154, C61/C156, and C129/C146. The C-type lectin domain occupies 33–155 (MNGLCYKIFD…CESKNAFLCQ (123 aa)). Residues Q119, D121, E127, N142, and D143 each contribute to the Ca(2+) site. Residues 119-121 (QPD) carry the Galactose-binding motif.

In terms of assembly, homodimer; disulfide-linked. As to expression, expressed by the venom gland.

It is found in the secreted. Functionally, lectin with a hemagglutinating activity that is inhibited by galactose, lactose and EDTA. Is calcium-dependent. Shows effects on the renal function of isolated perfused rat kidneys by increasing both perfusion pressure (PP) and renal vascular resistance (RVR). In addition, the urinary flow and glomerular filtration rate (GFR) decreases significantly. The changes observed may reflect direct injury to the glomerular and tubular renal cells, and the rise in permeability in the glomerular endothelial cells, may be the effect of interactions of C-type lectin with endothelial cells or due to release of other mediators by mesangial, tubular and endothelial cells. This is C-type lectin BiL from Bothrops insularis (Golden lancehead).